We begin with the raw amino-acid sequence, 332 residues long: Lipoyl synthase (332 aa).

The [4Fe-4S] cluster site is built by cysteine 79, cysteine 84, cysteine 90, cysteine 105, cysteine 109, cysteine 112, and serine 319. The Radical SAM core domain maps to 91-308 (FSHGTATFMI…ADYGYEIGFK (218 aa)).

This sequence belongs to the radical SAM superfamily. Lipoyl synthase family. [4Fe-4S] cluster is required as a cofactor.

It is found in the cytoplasm. The enzyme catalyses [[Fe-S] cluster scaffold protein carrying a second [4Fe-4S](2+) cluster] + N(6)-octanoyl-L-lysyl-[protein] + 2 oxidized [2Fe-2S]-[ferredoxin] + 2 S-adenosyl-L-methionine + 4 H(+) = [[Fe-S] cluster scaffold protein] + N(6)-[(R)-dihydrolipoyl]-L-lysyl-[protein] + 4 Fe(3+) + 2 hydrogen sulfide + 2 5'-deoxyadenosine + 2 L-methionine + 2 reduced [2Fe-2S]-[ferredoxin]. It functions in the pathway protein modification; protein lipoylation via endogenous pathway; protein N(6)-(lipoyl)lysine from octanoyl-[acyl-carrier-protein]: step 2/2. In terms of biological role, catalyzes the radical-mediated insertion of two sulfur atoms into the C-6 and C-8 positions of the octanoyl moiety bound to the lipoyl domains of lipoate-dependent enzymes, thereby converting the octanoylated domains into lipoylated derivatives. In Hahella chejuensis (strain KCTC 2396), this protein is Lipoyl synthase.